A 443-amino-acid chain; its full sequence is Xaa-Pro dipeptidase (443 aa).

Mn(2+) is bound by residues Asp-246, Asp-257, His-339, Glu-384, and Glu-423.

Belongs to the peptidase M24B family. Bacterial-type prolidase subfamily. The cofactor is Mn(2+).

The catalysed reaction is Xaa-L-Pro dipeptide + H2O = an L-alpha-amino acid + L-proline. In terms of biological role, splits dipeptides with a prolyl residue in the C-terminal position. The sequence is that of Xaa-Pro dipeptidase from Shigella flexneri serotype 5b (strain 8401).